The primary structure comprises 187 residues: Ubiquinone biosynthesis protein COQ4 homolog, mitochondrial (187 aa).

His-77, Asp-78, His-81, and Glu-93 together coordinate Zn(2+).

Belongs to the COQ4 family. Component of a multi-subunit COQ enzyme complex. Requires Zn(2+) as cofactor.

The protein resides in the mitochondrion inner membrane. It carries out the reaction a 4-hydroxy-3-methoxy-5-(all-trans-polyprenyl)benzoate + H(+) = a 2-methoxy-6-(all-trans-polyprenyl)phenol + CO2. The protein operates within cofactor biosynthesis; ubiquinone biosynthesis. Lyase that catalyzes the C1-decarboxylation of 4-hydroxy-3-methoxy-5-(all-trans-polyprenyl)benzoic acid into 2-methoxy-6-(all-trans-polyprenyl)phenol during ubiquinone biosynthesis. The chain is Ubiquinone biosynthesis protein COQ4 homolog, mitochondrial from Leishmania major.